The chain runs to 31 residues: Chassatide C5 (31 aa).

Residues 1–31 constitute a cross-link (cyclopeptide (Gly-Asn)); the sequence is GVIPCGESCVFIPCISSVVGCSCKNKVCYRN. Disulfide bonds link Cys-5–Cys-21, Cys-9–Cys-23, and Cys-14–Cys-28.

In terms of processing, this is a cyclic peptide. Expressed in pedicel, root and stem but not in leaf and fruit (at protein level).

Its function is as follows. Probably participates in a plant defense mechanism. This is Chassatide C5 from Chassalia chartacea (Chassalia curviflora).